The sequence spans 881 residues: Sodium/sulfate cotransporter 1 (881 aa).

The next 6 helical transmembrane spans lie at 8–28 (GIVA…DWVG), 31–51 (ITFT…VTVA), 61–81 (GLLT…TGGL), 107–127 (MVLS…PILI), 140–160 (LLIP…IGTS), and 186–206 (IFDI…FILL). RCK C-terminal domains lie at 212–296 (LPGN…EYGL), 318–402 (VFSA…IKTN), 407–492 (LHAV…FPGL), and 498–584 (EQVD…DKSF). 6 helical membrane-spanning segments follow: residues 601–621 (MIIG…GGLK), 625–645 (YIHL…TGCM), 658–678 (VYLT…TGVA), 684–704 (AIIS…AIYI), 775–795 (FAIV…FILV), and 803–823 (VWIV…LYFL). A disordered region spans residues 854–881 (SLRRQVSHTRTDDSGSSGSPLPAPKIVA).

This sequence belongs to the divalent anion:Na+ symporter (DASS) superfamily. Na+/sulfate symporter (TC 2.A.47.4) family.

It is found in the cell membrane. Its function is as follows. Na(+)/sulfate cotransporter with a probable high-affinity for sulfate and a proteasome dependent turnover. The polypeptide is Sodium/sulfate cotransporter 1 (SLT1) (Chlamydomonas reinhardtii (Chlamydomonas smithii)).